A 225-amino-acid chain; its full sequence is Octanoyltransferase (225 aa).

The BPL/LPL catalytic domain maps to 42–219 (KNRQASMIFC…SICSALEYIN (178 aa)). Substrate-binding positions include 79–86 (RGGKITWH), 149–151 (AIG), and 162–164 (GFA). C180 functions as the Acyl-thioester intermediate in the catalytic mechanism.

Belongs to the LipB family.

The protein resides in the cytoplasm. The enzyme catalyses octanoyl-[ACP] + L-lysyl-[protein] = N(6)-octanoyl-L-lysyl-[protein] + holo-[ACP] + H(+). It participates in protein modification; protein lipoylation via endogenous pathway; protein N(6)-(lipoyl)lysine from octanoyl-[acyl-carrier-protein]: step 1/2. Its function is as follows. Catalyzes the transfer of endogenously produced octanoic acid from octanoyl-acyl-carrier-protein onto the lipoyl domains of lipoate-dependent enzymes. Lipoyl-ACP can also act as a substrate although octanoyl-ACP is likely to be the physiological substrate. In Tropheryma whipplei (strain TW08/27) (Whipple's bacillus), this protein is Octanoyltransferase.